Reading from the N-terminus, the 1284-residue chain is Integrator complex subunit 6 (1284 aa).

The 132-residue stretch at 3 to 134 (IILFLVDTSS…PSVIIVITDG (132 aa)) folds into the VWFA domain. 4 disordered regions span residues 653-824 (DVAP…GMSN), 864-895 (ETGE…SPAV), 1053-1086 (TSSG…DDHA), and 1125-1180 (NNSS…PGQS). The segment covering 690 to 721 (SPGGGSGPGMPGMPGMGGGMSGLMLGAGGSGG) has biased composition (gly residues). 2 stretches are compositionally biased toward low complexity: residues 752–781 (DSRS…SSIS) and 803–824 (NSNS…GMSN). The segment covering 879–890 (GASSANEPSSIG) has biased composition (polar residues). 2 stretches are compositionally biased toward low complexity: residues 1053 to 1074 (TSSG…NGST) and 1125 to 1141 (NNSS…LSNN). A compositionally biased stretch (polar residues) spans 1159–1171 (INSSCGSSPTHNN).

The protein belongs to the Integrator subunit 6 family. In terms of assembly, belongs to the multiprotein complex Integrator, at least composed of IntS1, IntS2, IntS3, IntS4, omd/IntS5, IntS6, defl/IntS7, IntS8, IntS9, IntS10, IntS11, IntS12, asun/IntS13, IntS14 and IntS15. The core complex associates with protein phosphatase 2A subunits mts/PP2A and Pp2A-29B, to form the Integrator-PP2A (INTAC) complex.

It is found in the nucleus. Component of the integrator complex, a multiprotein complex that terminates RNA polymerase II (Pol II) transcription in the promoter-proximal region of genes. The integrator complex provides a quality checkpoint during transcription elongation by driving premature transcription termination of transcripts that are unfavorably configured for transcriptional elongation: the complex terminates transcription by (1) catalyzing dephosphorylation of the C-terminal domain (CTD) of Pol II subunit Polr2A/Rbp1 and Spt5, and (2) degrading the exiting nascent RNA transcript via endonuclease activity. The integrator complex is also involved in the 3'-end processing of the U7 snRNA, and also the spliceosomal snRNAs U1, U2, U4 and U5. Within the integrator complex, IntS6 acts as a substrate adapter for protein phosphatase 2A (PP2A). The polypeptide is Integrator complex subunit 6 (Drosophila melanogaster (Fruit fly)).